Here is a 208-residue protein sequence, read N- to C-terminus: uncharacterized protein (208 aa).

This is an uncharacterized protein from Legionella pneumophila subsp. pneumophila (strain Philadelphia 1 / ATCC 33152 / DSM 7513).